Consider the following 297-residue polypeptide: Aspartate carbamoyltransferase catalytic subunit (297 aa).

2 residues coordinate carbamoyl phosphate: R51 and T52. L-aspartate is bound at residue K79. Residues R101, H130, and Q133 each contribute to the carbamoyl phosphate site. The L-aspartate site is built by R163 and R215. Residues G256 and P257 each contribute to the carbamoyl phosphate site.

It belongs to the aspartate/ornithine carbamoyltransferase superfamily. ATCase family. Heterododecamer (2C3:3R2) of six catalytic PyrB chains organized as two trimers (C3), and six regulatory PyrI chains organized as three dimers (R2).

It catalyses the reaction carbamoyl phosphate + L-aspartate = N-carbamoyl-L-aspartate + phosphate + H(+). The protein operates within pyrimidine metabolism; UMP biosynthesis via de novo pathway; (S)-dihydroorotate from bicarbonate: step 2/3. Functionally, catalyzes the condensation of carbamoyl phosphate and aspartate to form carbamoyl aspartate and inorganic phosphate, the committed step in the de novo pyrimidine nucleotide biosynthesis pathway. The polypeptide is Aspartate carbamoyltransferase catalytic subunit (Ehrlichia ruminantium (strain Gardel)).